The primary structure comprises 312 residues: Olfactory receptor 4K17 (312 aa).

Topologically, residues 1–25 are extracellular; sequence MKLLNQSQVSEFILLGLTSSQDVEF. A glycan (N-linked (GlcNAc...) asparagine) is linked at Asn-5. Residues 26–49 form a helical membrane-spanning segment; sequence LLFALFSVIYVVTVLGNLLIIVTV. At 50–57 the chain is on the cytoplasmic side; sequence FNTPNLNT. Residues 58–79 traverse the membrane as a helical segment; sequence PMYFLLGNLSFVDMTLASFATP. Over 80–100 the chain is Extracellular; sequence KVILNLLKKQKVISFAGCFTQ. Cys-97 and Cys-189 are joined by a disulfide. A helical membrane pass occupies residues 101 to 120; that stretch reads IFLLHLLGGVEMVLLVSMAF. At 121–139 the chain is on the cytoplasmic side; that stretch reads DRYVAICKPLHYMTIMNKK. Residues 140 to 158 traverse the membrane as a helical segment; it reads VCVLLVVTSWLLGLLHSGF. Residues 159–195 are Extracellular-facing; it reads QIPFAVNLPFCGPNVVDSIFCDLPLVTKLACIDIYFV. Residues 196–219 traverse the membrane as a helical segment; it reads QVVIVANSGIISLSCFIILLISYS. Residues 220–235 lie on the Cytoplasmic side of the membrane; sequence LILITIKNHSPTGQSK. A helical membrane pass occupies residues 236 to 258; it reads ARSTLTAHITVVILFFGPCIFIY. Over 259-269 the chain is Extracellular; the sequence is IWPFGNHSVDK. N-linked (GlcNAc...) asparagine glycosylation is present at Asn-264. The chain crosses the membrane as a helical span at residues 270–289; the sequence is FLAVFYTIITPILNPIIYTL. The Cytoplasmic portion of the chain corresponds to 290–312; sequence RNKEMKISMKKLWRAFVNSREDT.

The protein belongs to the G-protein coupled receptor 1 family.

The protein resides in the cell membrane. Odorant receptor. In Homo sapiens (Human), this protein is Olfactory receptor 4K17 (OR4K17).